The chain runs to 224 residues: Ribonuclease 3 (224 aa).

Residues 5–127 form the RNase III domain; it reads LERLCRRLNY…ILAAIYLDGG (123 aa). Glu40 serves as a coordination point for Mg(2+). Asp44 is an active-site residue. Mg(2+)-binding residues include Asp113 and Glu116. The active site involves Glu116. The DRBM domain maps to 154-224; the sequence is DAKTQLQEFL…AKAMLEQLQG (71 aa).

The protein belongs to the ribonuclease III family. Homodimer. Mg(2+) serves as cofactor.

It localises to the cytoplasm. The enzyme catalyses Endonucleolytic cleavage to 5'-phosphomonoester.. Functionally, digests double-stranded RNA. Involved in the processing of primary rRNA transcript to yield the immediate precursors to the large and small rRNAs (23S and 16S). Processes some mRNAs, and tRNAs when they are encoded in the rRNA operon. Processes pre-crRNA and tracrRNA of type II CRISPR loci if present in the organism. This Legionella pneumophila (strain Paris) protein is Ribonuclease 3.